The sequence spans 265 residues: MVVINGVKYACDSCIKSHKAAQCEHNDRPLKILKPRGRPPTTCDHCKDMRKTKNVNPSGSCNCSKLEKIRQEKGITIEEDMLMSGNMDMCLCVRGEPCRCHARRKRTQKSNKKDNLSINSPTNNSPSPALSVNIGGMVVANDDILKSLGPIQNVDLTAPLDFPPNGIDNKPMESFYTQTSKSDAVDSLEFDHLMNMQMRNDNSLSFPMSANQNEVGYQFNNEGNNSMNSTMKNTITQMDQGNSHSMTLHDIDEILNNGIELGNVN.

The segment at residues 1–40 (MVVINGVKYACDSCIKSHKAAQCEHNDRPLKILKPRGRPP) is a DNA-binding region (copper-fist). The Zn(2+) site is built by Cys-11, Cys-14, Cys-23, and His-25. The segment at 103–129 (RRKRTQKSNKKDNLSINSPTNNSPSPA) is disordered. Over residues 119 to 128 (NSPTNNSPSP) the composition is skewed to low complexity.

It is found in the nucleus. Functionally, trans-acting regulatory protein that activates transcription of the MT genes (metallothionein) in response to copper or silver ions. The polypeptide is Metal-activated transcriptional activator protein AMT1 (AMT1) (Candida glabrata (strain ATCC 2001 / BCRC 20586 / JCM 3761 / NBRC 0622 / NRRL Y-65 / CBS 138) (Yeast)).